We begin with the raw amino-acid sequence, 161 residues long: Transcription elongation factor GreA (161 aa).

The protein belongs to the GreA/GreB family.

In terms of biological role, necessary for efficient RNA polymerase transcription elongation past template-encoded arresting sites. The arresting sites in DNA have the property of trapping a certain fraction of elongating RNA polymerases that pass through, resulting in locked ternary complexes. Cleavage of the nascent transcript by cleavage factors such as GreA or GreB allows the resumption of elongation from the new 3'terminus. GreA releases sequences of 2 to 3 nucleotides. The chain is Transcription elongation factor GreA from Desulfotalea psychrophila (strain LSv54 / DSM 12343).